We begin with the raw amino-acid sequence, 299 residues long: Recombination-associated protein RdgC (299 aa).

This sequence belongs to the RdgC family.

The protein resides in the cytoplasm. It is found in the nucleoid. Functionally, may be involved in recombination. The sequence is that of Recombination-associated protein RdgC from Cupriavidus pinatubonensis (strain JMP 134 / LMG 1197) (Cupriavidus necator (strain JMP 134)).